A 67-amino-acid chain; its full sequence is ATP synthase protein 8 (67 aa).

A helical membrane pass occupies residues 8–24; it reads TWFITILSMLMTLFILF. Lys54 carries the N6-acetyllysine; alternate modification. An N6-succinyllysine; alternate modification is found at Lys54. Lys57 is modified (N6-acetyllysine).

This sequence belongs to the ATPase protein 8 family. As to quaternary structure, F-type ATPases have 2 components, CF(1) - the catalytic core - and CF(0) - the membrane proton channel. Component of an ATP synthase complex composed of ATP5PB, ATP5MC1, ATP5F1E, ATP5PD, ATP5ME, ATP5PF, ATP5MF, MT-ATP6, MT-ATP8, ATP5F1A, ATP5F1B, ATP5F1D, ATP5F1C, ATP5PO, ATP5MG, ATP5MK and ATP5MJ. Interacts with PRICKLE3.

The protein resides in the mitochondrion membrane. Its function is as follows. Mitochondrial membrane ATP synthase (F(1)F(0) ATP synthase or Complex V) produces ATP from ADP in the presence of a proton gradient across the membrane which is generated by electron transport complexes of the respiratory chain. F-type ATPases consist of two structural domains, F(1) - containing the extramembraneous catalytic core and F(0) - containing the membrane proton channel, linked together by a central stalk and a peripheral stalk. During catalysis, ATP synthesis in the catalytic domain of F(1) is coupled via a rotary mechanism of the central stalk subunits to proton translocation. Part of the complex F(0) domain. Minor subunit located with subunit a in the membrane. The sequence is that of ATP synthase protein 8 (MT-ATP8) from Vicugna pacos (Alpaca).